Here is a 227-residue protein sequence, read N- to C-terminus: Ribosomal RNA large subunit methyltransferase E (227 aa).

Gly78, Trp80, Asp103, Asp119, and Asp143 together coordinate S-adenosyl-L-methionine. The active-site Proton acceptor is Lys183.

This sequence belongs to the class I-like SAM-binding methyltransferase superfamily. RNA methyltransferase RlmE family.

It is found in the cytoplasm. The catalysed reaction is uridine(2552) in 23S rRNA + S-adenosyl-L-methionine = 2'-O-methyluridine(2552) in 23S rRNA + S-adenosyl-L-homocysteine + H(+). Its function is as follows. Specifically methylates the uridine in position 2552 of 23S rRNA at the 2'-O position of the ribose in the fully assembled 50S ribosomal subunit. This Rickettsia conorii (strain ATCC VR-613 / Malish 7) protein is Ribosomal RNA large subunit methyltransferase E.